The chain runs to 73 residues: Putative antitoxin VapB21 (73 aa).

Belongs to the UPF0330 family.

Functionally, possibly the antitoxin component of a type II toxin-antitoxin (TA) system. Its cognate toxin is VapC21 (Potential). The protein is Putative antitoxin VapB21 (vapB21) of Sulfurisphaera tokodaii (strain DSM 16993 / JCM 10545 / NBRC 100140 / 7) (Sulfolobus tokodaii).